The primary structure comprises 104 residues: Putative arsenate reductase (104 aa).

The active site involves Cys12.

The protein belongs to the ArsC family.

The enzyme catalyses [glutaredoxin]-dithiol + arsenate + glutathione + H(+) = glutathionyl-S-S-[glutaredoxin] + arsenite + H2O. In terms of biological role, reduction of arsenate [As(V)] to arsenite [As(III)]. This protein expands the substrate specificity of ArsAB pump which can extrude arsenite and antimonite to allow for arsenate pumping and resistance. This Escherichia coli (strain K12) protein is Putative arsenate reductase (yfjU).